Reading from the N-terminus, the 561-residue chain is Methyl-accepting chemotaxis protein CtpM (561 aa).

Residues 1 to 11 (MMRLTLKSKVL) lie on the Cytoplasmic side of the membrane. Residues 12 to 32 (LLAMVPVLLFALVLSGGAVLI) form a helical membrane-spanning segment. The Periplasmic portion of the chain corresponds to 33–205 (LKKQADAEVK…KQDIDERIGT (173 aa)). Residues 206–226 (LIASIVGIAGVLLVVLLVIGL) form a helical membrane-spanning segment. At 227–561 (AVANAMLRPL…LGRLVGQFRI (335 aa)) the chain is on the cytoplasmic side. The HAMP domain occupies 230–284 (NAMLRPLHQIRQNLDDIAAGEGDLTRRLPVTSYDELGELAGSFNRFVEKIHGLVR). The region spanning 289–525 (MTGDLKQLVE…EINRSVHQIA (237 aa)) is the Methyl-accepting transducer domain. Residues 333–357 (HEVAQSAQRAAEAAQQTDHEGQAAK) form a disordered region. The span at 336–348 (AQSAQRAAEAAQQ) shows a compositional bias: low complexity.

This sequence belongs to the methyl-accepting chemotaxis (MCP) protein family. Homodimer. The ligand-binding domain (LBD) is dimeric in the presence and the absence of ligands.

The protein resides in the cell inner membrane. Functionally, chemotactic-signal transducers respond to changes in the concentration of attractants and repellents in the environment, transduce a signal from the outside to the inside of the cell, and facilitate sensory adaptation through the variation of the level of methylation. Directly recognizes five C4-dicarboxylic acids: L-malic, citramalic, citraconic, bromosuccinic and methylsuccinic acids. Three of the identified ligands act as chemoattractants (L-malic, D,L-bromosuccinic and L-citramalic acids) whereas two of them (L-methylsuccinic and citraconic acids) behave as antagonists by inhibiting the downstream chemotaxis signaling cascade. Antagonists compete with chemoattractants, thereby decreasing the affinity for chemoattractants and the subsequent chemotactic response. Acts through the che chemosensory pathway. In Pseudomonas aeruginosa (strain ATCC 15692 / DSM 22644 / CIP 104116 / JCM 14847 / LMG 12228 / 1C / PRS 101 / PAO1), this protein is Methyl-accepting chemotaxis protein CtpM.